The following is a 176-amino-acid chain: Tubulin polymerization-promoting protein family member 3 (176 aa).

Ala2 is subject to N-acetylalanine.

This sequence belongs to the TPPP family.

The protein resides in the cytoplasm. The protein localises to the cytoskeleton. In terms of biological role, regulator of microtubule dynamic that has microtubule bundling activity. Required for embryo implantation; possibly by regulating beta-catenin. Also required for decidualization via regulation of beta-catenin. This chain is Tubulin polymerization-promoting protein family member 3 (Tppp3), found in Rattus norvegicus (Rat).